We begin with the raw amino-acid sequence, 133 residues long: Small ribosomal subunit protein uS8 (133 aa).

This sequence belongs to the universal ribosomal protein uS8 family. As to quaternary structure, part of the 30S ribosomal subunit. Contacts proteins S5 and S12.

Its function is as follows. One of the primary rRNA binding proteins, it binds directly to 16S rRNA central domain where it helps coordinate assembly of the platform of the 30S subunit. This chain is Small ribosomal subunit protein uS8, found in Orientia tsutsugamushi (strain Ikeda) (Rickettsia tsutsugamushi).